The following is a 196-amino-acid chain: Segregation and condensation protein B (196 aa).

The protein belongs to the ScpB family. As to quaternary structure, homodimer. Homodimerization may be required to stabilize the binding of ScpA to the Smc head domains. Component of a cohesin-like complex composed of ScpA, ScpB and the Smc homodimer, in which ScpA and ScpB bind to the head domain of Smc. The presence of the three proteins is required for the association of the complex with DNA.

The protein localises to the cytoplasm. Functionally, participates in chromosomal partition during cell division. May act via the formation of a condensin-like complex containing Smc and ScpA that pull DNA away from mid-cell into both cell halves. The protein is Segregation and condensation protein B of Pediococcus pentosaceus (strain ATCC 25745 / CCUG 21536 / LMG 10740 / 183-1w).